Here is a 603-residue protein sequence, read N- to C-terminus: F-box only protein 46 (603 aa).

A disordered region spans residues 20-54 (YSQNQPRPPSATLKPPVCPDTSSGTEPDHRPAHLE). Phosphoserine is present on residues serine 21 and serine 67. Disordered regions lie at residues 111-163 (GGSR…PTSS), 235-301 (EAQR…TRAK), 332-359 (EASE…ARDC), and 396-442 (TVSP…GTTD). Threonine 347 carries the phosphothreonine modification. A compositionally biased stretch (pro residues) spans 347–356 (TPPAPPPPPA). The 53-residue stretch at 470-522 (RQYMLLLPEHVLVKIFSFLPTRALAALKCTCHHFKGIIEAFGVRATDSRWSRD) folds into the F-box domain.

As to quaternary structure, part of a SCF (SKP1-cullin-F-box) protein ligase complex SCF(FBXO46) composed of CUL1, SKP1, RBX1 and FBXO46. Post-translationally, phosphorylated by ATM in response to DNA damage, promoting ubiquitination and degradation by the SCF(FBXO31) complex. ATM-phosphorylated FBXO46 is ubiquitinated and degradaded by the SCF(FBXO31) complex in response to DNA damage.

It participates in protein modification; protein ubiquitination. Substrate-recognition component of the SCF(FBXO46) protein ligase complex, which mediates the ubiquitination and degradation of target proteins. In absence of stress, the SCF(FBXO46) complex catalyzes ubiquitination and degradation of MTOR-phosphorylated FBXO31. This chain is F-box only protein 46 (Fbxo46), found in Rattus norvegicus (Rat).